Consider the following 852-residue polypeptide: DNA mismatch repair protein MutS (852 aa).

602–609 is an ATP binding site; sequence GPNMSGKS.

The protein belongs to the DNA mismatch repair MutS family.

Functionally, this protein is involved in the repair of mismatches in DNA. It is possible that it carries out the mismatch recognition step. This protein has a weak ATPase activity. The sequence is that of DNA mismatch repair protein MutS from Streptococcus thermophilus (strain ATCC BAA-250 / LMG 18311).